The sequence spans 882 residues: Alanine--tRNA ligase (882 aa).

Residues His568, His572, Cys670, and His674 each contribute to the Zn(2+) site.

It belongs to the class-II aminoacyl-tRNA synthetase family. The cofactor is Zn(2+).

The protein resides in the cytoplasm. It carries out the reaction tRNA(Ala) + L-alanine + ATP = L-alanyl-tRNA(Ala) + AMP + diphosphate. Functionally, catalyzes the attachment of alanine to tRNA(Ala) in a two-step reaction: alanine is first activated by ATP to form Ala-AMP and then transferred to the acceptor end of tRNA(Ala). Also edits incorrectly charged Ser-tRNA(Ala) and Gly-tRNA(Ala) via its editing domain. The polypeptide is Alanine--tRNA ligase (Lactobacillus gasseri (strain ATCC 33323 / DSM 20243 / BCRC 14619 / CIP 102991 / JCM 1131 / KCTC 3163 / NCIMB 11718 / NCTC 13722 / AM63)).